The chain runs to 292 residues: Glycine--tRNA ligase alpha subunit (292 aa).

It belongs to the class-II aminoacyl-tRNA synthetase family. As to quaternary structure, tetramer of two alpha and two beta subunits.

The protein localises to the cytoplasm. The enzyme catalyses tRNA(Gly) + glycine + ATP = glycyl-tRNA(Gly) + AMP + diphosphate. The polypeptide is Glycine--tRNA ligase alpha subunit (Pelotomaculum thermopropionicum (strain DSM 13744 / JCM 10971 / SI)).